A 151-amino-acid polypeptide reads, in one-letter code: UPF0756 membrane protein Dred_1097 (151 aa).

The next 4 helical transmembrane spans lie at 6 to 26 (IILL…LATA), 52 to 72 (VGLI…NIVY), 75 to 95 (LVMK…TLAT), and 111 to 131 (LIFG…GIPI).

This sequence belongs to the UPF0756 family.

Its subcellular location is the cell membrane. This chain is UPF0756 membrane protein Dred_1097, found in Desulforamulus reducens (strain ATCC BAA-1160 / DSM 100696 / MI-1) (Desulfotomaculum reducens).